The chain runs to 285 residues: Acetyl-coenzyme A carboxylase carboxyl transferase subunit beta (285 aa).

The 264-residue stretch at 22-285 (LWTKCEACGA…HPGVAYAPGV (264 aa)) folds into the CoA carboxyltransferase N-terminal domain. Zn(2+) is bound by residues C26, C29, C45, and C48. The C4-type zinc finger occupies 26-48 (CEACGAQIYKKEFQENLHVCPKC).

It belongs to the AccD/PCCB family. As to quaternary structure, acetyl-CoA carboxylase is a heterohexamer composed of biotin carboxyl carrier protein (AccB), biotin carboxylase (AccC) and two subunits each of ACCase subunit alpha (AccA) and ACCase subunit beta (AccD). Zn(2+) serves as cofactor.

It is found in the cytoplasm. The enzyme catalyses N(6)-carboxybiotinyl-L-lysyl-[protein] + acetyl-CoA = N(6)-biotinyl-L-lysyl-[protein] + malonyl-CoA. Its pathway is lipid metabolism; malonyl-CoA biosynthesis; malonyl-CoA from acetyl-CoA: step 1/1. Functionally, component of the acetyl coenzyme A carboxylase (ACC) complex. Biotin carboxylase (BC) catalyzes the carboxylation of biotin on its carrier protein (BCCP) and then the CO(2) group is transferred by the transcarboxylase to acetyl-CoA to form malonyl-CoA. The sequence is that of Acetyl-coenzyme A carboxylase carboxyl transferase subunit beta from Thermus thermophilus (strain ATCC 27634 / DSM 579 / HB8).